Here is a 498-residue protein sequence, read N- to C-terminus: Pre-glycoprotein polyprotein GP complex (498 aa).

Residue Gly-2 is the site of N-myristoyl glycine; by host attachment. Residues 2 to 17 (GQIVTMFEALPHIIDE) are Extracellular-facing. Residues 18–33 (VINIVIIVLIVITGIK) form a helical membrane-spanning segment. At 34–58 (AVYNFATCGIFALISFLLLAGRSCG) the chain is on the cytoplasmic side. A Zn(2+)-binding site is contributed by Cys-57. Topologically, residues 59 to 438 (MYGLKGPDIY…QGSTPLALMD (380 aa)) are extracellular. N-linked (GlcNAc...) asparagine; by host glycosylation is found at Asn-85, Asn-95, Asn-114, Asn-124, and Asn-171. 6 disulfides stabilise this stretch: Cys-92–Cys-239, Cys-123–Cys-160, Cys-184–Cys-220, Cys-285–Cys-298, Cys-307–Cys-316, and Cys-370–Cys-391. Asn-232 carries N-linked (GlcNAc...) asparagine; by host glycosylation. N-linked (GlcNAc...) asparagine; by host glycans are attached at residues Asn-371, Asn-396, and Asn-401. A helical transmembrane segment spans residues 439 to 459 (LLMFSTSAYLVSIFLHLVKIP). Residues 460 to 498 (THRHIKGGSCPKPHRLTNKGICSCGAFKVPGVKTVWKRR) are Cytoplasmic-facing. The Zn(2+) site is built by His-461, His-463, Cys-469, His-473, Cys-481, and Cys-483.

It belongs to the arenaviridae GPC protein family. In terms of assembly, interacts with glycoprotein G2. Part of the GP complex (GP-C) together with glycoprotein G1 and glycoprotein G2. The GP-complex interacts with protein Z, which interacts with ribonucleocapsid; these interactions may induce virion budding. As to quaternary structure, homotrimer; disulfide-linked. In pre-fusion state, G1 homotrimers bind G2 homotrimers via ionic interactions. Part of the GP complex (GP-C) together with glycoprotein G2 and the stable signal peptide. Interacts with the primary host receptor DAG1 on the cell surface. The GP-complex interacts with protein Z, which interacts with ribonucleocapsid; these interactions may induce virion budding. Homotrimer. Interacts with the stable signal peptide. In pre-fusion state, G2 homotrimers bind G1 homotrimers via ionic interactions. Part of the GP complex (GP-C) together with glycoprotein G1 and the stable signal peptide. Acidification in the endosome triggers rearrangements, which ultimately leads to a 6 helix bundle formed by the two heptad repeat domains (HR1 and HR2) in post-fusion state. The GP-complex interacts with protein Z, which interacts with ribonucleocapsid; these interactions may induce virion budding. Specific enzymatic cleavages in vivo yield mature proteins. GP-C polyprotein is cleaved in the endoplasmic reticulum by the host protease MBTPS1. Only cleaved glycoprotein is incorporated into virions. Post-translationally, the SSP remains stably associated with the GP complex following cleavage by signal peptidase and plays crucial roles in the trafficking of GP through the secretory pathway. In terms of processing, myristoylation is necessary for GP2-mediated fusion activity. Inhibition of host myristoylation by the compound DDD85646 leads to the abrogation of GP2-mediated fusion upon exposure to low pH and inhibition of viral multiplication.

It localises to the virion membrane. Its subcellular location is the host endoplasmic reticulum membrane. It is found in the host Golgi apparatus membrane. The protein resides in the host cell membrane. In terms of biological role, functions as a cleaved signal peptide that is retained as the third component of the GP complex (GP-C). Helps to stabilize the spike complex in its native conformation. The SSP is required for efficient glycoprotein expression, post-translational maturation cleavage of G1 and G2, glycoprotein transport to the cell surface plasma membrane, formation of infectious virus particles, and acid pH-dependent glycoprotein-mediated cell fusion. Functionally, forms the virion spikes together with glycoprotein G2. The glycoprotein spike trimers are connected to the underlying matrix. Interacts with the host receptor. Mediates virus attachment to the host primary receptor alpha-dystroglycan DAG1 (alpha-DG) at the cell surface. Down-modulates host DAG1. Its function is as follows. Forms the virion spikes together with glycoprotein G1. The glycoprotein spike trimers are connected to the underlying matrix. Class I viral fusion protein that directs fusion of viral and host endosomal membranes, leading to delivery of the nucleocapsid into the cytoplasm. Membrane fusion is mediated by irreversible conformational changes induced by acidification. The chain is Pre-glycoprotein polyprotein GP complex from Homo sapiens (Human).